Here is a 207-residue protein sequence, read N- to C-terminus: Outer-membrane lipoprotein LolB (207 aa).

Positions 1–21 (MPTNTVRCLRLLPLASVLLAA) are cleaved as a signal peptide. A lipid anchor (N-palmitoyl cysteine) is attached at Cys-22. A lipid anchor (S-diacylglycerol cysteine) is attached at Cys-22.

It belongs to the LolB family. In terms of assembly, monomer.

Its subcellular location is the cell outer membrane. In terms of biological role, plays a critical role in the incorporation of lipoproteins in the outer membrane after they are released by the LolA protein. The protein is Outer-membrane lipoprotein LolB of Pectobacterium carotovorum subsp. carotovorum (strain PC1).